The primary structure comprises 368 residues: Queuine tRNA-ribosyltransferase (368 aa).

Residue Asp89 is the Proton acceptor of the active site. Substrate is bound by residues 89–93 (DSGGF), Asp143, Gln187, and Gly214. Asp264 (nucleophile) is an active-site residue. An RNA binding; important for wobble base 34 recognition region spans residues 269–273 (TRNAR). 4 residues coordinate Zn(2+): Cys302, Cys304, Cys307, and His333.

The protein belongs to the queuine tRNA-ribosyltransferase family. Homodimer. Within each dimer, one monomer is responsible for RNA recognition and catalysis, while the other monomer binds to the replacement base PreQ1. Requires Zn(2+) as cofactor.

The enzyme catalyses 7-aminomethyl-7-carbaguanine + guanosine(34) in tRNA = 7-aminomethyl-7-carbaguanosine(34) in tRNA + guanine. The protein operates within tRNA modification; tRNA-queuosine biosynthesis. Its function is as follows. Catalyzes the base-exchange of a guanine (G) residue with the queuine precursor 7-aminomethyl-7-deazaguanine (PreQ1) at position 34 (anticodon wobble position) in tRNAs with GU(N) anticodons (tRNA-Asp, -Asn, -His and -Tyr). Catalysis occurs through a double-displacement mechanism. The nucleophile active site attacks the C1' of nucleotide 34 to detach the guanine base from the RNA, forming a covalent enzyme-RNA intermediate. The proton acceptor active site deprotonates the incoming PreQ1, allowing a nucleophilic attack on the C1' of the ribose to form the product. After dissociation, two additional enzymatic reactions on the tRNA convert PreQ1 to queuine (Q), resulting in the hypermodified nucleoside queuosine (7-(((4,5-cis-dihydroxy-2-cyclopenten-1-yl)amino)methyl)-7-deazaguanosine). The chain is Queuine tRNA-ribosyltransferase from Blochmanniella pennsylvanica (strain BPEN).